The sequence spans 237 residues: Carboxy-S-adenosyl-L-methionine synthase (237 aa).

S-adenosyl-L-methionine is bound by residues tyrosine 36, 61–63, 86–87, 112–113, asparagine 127, and arginine 194; these read GAS, DN, and DI.

The protein belongs to the class I-like SAM-binding methyltransferase superfamily. Cx-SAM synthase family. Homodimer.

The catalysed reaction is prephenate + S-adenosyl-L-methionine = carboxy-S-adenosyl-L-methionine + 3-phenylpyruvate + H2O. Functionally, catalyzes the conversion of S-adenosyl-L-methionine (SAM) to carboxy-S-adenosyl-L-methionine (Cx-SAM). The protein is Carboxy-S-adenosyl-L-methionine synthase of Ruthia magnifica subsp. Calyptogena magnifica.